We begin with the raw amino-acid sequence, 78 residues long: MKLTCMMIVAVLFLTAWTSVTAVNTRGELENLFLRASHEMNSEASKLDKKVCVDGGTFCGFPKIGGPCCSGWCIFVCL.

Residues 1–22 (MKLTCMMIVAVLFLTAWTSVTA) form the signal peptide. Residues 23-48 (VNTRGELENLFLRASHEMNSEASKLD) constitute a propeptide that is removed on maturation. 3 disulfide bridges follow: Cys52/Cys69, Cys59/Cys73, and Cys68/Cys77.

This sequence belongs to the conotoxin O1 superfamily. As to expression, expressed by the venom duct.

It localises to the secreted. Functionally, omega-conotoxins act at presynaptic membranes, they bind and block voltage-gated calcium channels (Cav). The sequence is that of Omega-conotoxin-like ArMKLT1-011 from Conus arenatus (Sand-dusted cone).